A 416-amino-acid chain; its full sequence is Phosphoglycerate kinase (416 aa).

(2R)-3-phosphoglycerate contacts are provided by V23, D24, F25, N26, Q38, R39, S62, H63, G65, R66, L121, R122, H168, and R169. G212 serves as a coordination point for ADP. Residue G212 participates in CDP binding. AMP is bound by residues A213 and K214. A213 lines the ATP pocket. A213 serves as a coordination point for Mg(2+). 2 residues coordinate Mg(2+): A216 and D217. D217 lines the CDP pocket. K218 is a binding site for AMP. K218 serves as a coordination point for ATP. Residue G236 participates in ADP binding. Residue G236 coordinates CDP. Positions 237 and 311 each coordinate AMP. ATP-binding residues include G237 and G311. Residues G336 and F341 each coordinate CDP. F341 contacts ADP. E342 is a binding site for AMP. ATP is bound by residues E342, D373, and T374. Residue D373 coordinates Mg(2+).

It belongs to the phosphoglycerate kinase family. As to quaternary structure, monomer. Mg(2+) serves as cofactor.

The protein localises to the cytoplasm. It is found in the mitochondrion. The catalysed reaction is (2R)-3-phosphoglycerate + ATP = (2R)-3-phospho-glyceroyl phosphate + ADP. It functions in the pathway carbohydrate degradation; glycolysis; pyruvate from D-glyceraldehyde 3-phosphate: step 2/5. In terms of biological role, catalyzes one of the two ATP producing reactions in the glycolytic pathway via the reversible conversion of 1,3-diphosphoglycerate to 3-phosphoglycerate. Both L- and D- forms of purine and pyrimidine nucleotides can be used as substrates, but the activity is much lower on pyrimidines. Negatively regulates the biosynthesis of acetyl-CoA from pyruvate in the mitochondrion. This is Phosphoglycerate kinase (PGK1) from Candida glabrata (strain ATCC 2001 / BCRC 20586 / JCM 3761 / NBRC 0622 / NRRL Y-65 / CBS 138) (Yeast).